The chain runs to 172 residues: Transcriptional repressor NrdR (172 aa).

The segment at 3–34 (CPYCRNTDTRVLDSRVADDGGSIRRRRTCSAC) is a zinc-finger region. The ATP-cone domain occupies 46-136 (LTVLKRSGAS…VYRAFESADD (91 aa)).

It belongs to the NrdR family. The cofactor is Zn(2+).

In terms of biological role, negatively regulates transcription of bacterial ribonucleotide reductase nrd genes and operons by binding to NrdR-boxes. This Nocardioides sp. (strain ATCC BAA-499 / JS614) protein is Transcriptional repressor NrdR.